The primary structure comprises 443 residues: Chromosomal replication initiator protein DnaA (443 aa).

The segment at 1–67 (MDAWSRSLER…RELLAHFAGF (67 aa)) is domain I, interacts with DnaA modulators. The tract at residues 67–105 (FSDVFLEIGSRPRPVEAQNAPFSTPSAHVSSEPQVPFAG) is domain II. The segment at 106-323 (NLDNHYTFAN…GALNTLTARA (218 aa)) is domain III, AAA+ region. ATP contacts are provided by Gly-151, Gly-153, Lys-154, and Thr-155. The tract at residues 324–443 (NFTGRAITTE…WDKLIRKLSE (120 aa)) is domain IV, binds dsDNA.

It belongs to the DnaA family. In terms of assembly, oligomerizes as a right-handed, spiral filament on DNA at oriC.

The protein localises to the cytoplasm. Plays an essential role in the initiation and regulation of chromosomal replication. ATP-DnaA binds to the origin of replication (oriC) to initiate formation of the DNA replication initiation complex once per cell cycle. Binds the DnaA box (a 9 base pair repeat at the origin) and separates the double-stranded (ds)DNA. Forms a right-handed helical filament on oriC DNA; dsDNA binds to the exterior of the filament while single-stranded (ss)DNA is stabiized in the filament's interior. The ATP-DnaA-oriC complex binds and stabilizes one strand of the AT-rich DNA unwinding element (DUE), permitting loading of DNA polymerase. After initiation quickly degrades to an ADP-DnaA complex that is not apt for DNA replication. Binds acidic phospholipids. The protein is Chromosomal replication initiator protein DnaA of Stenotrophomonas maltophilia (strain R551-3).